A 486-amino-acid polypeptide reads, in one-letter code: Protein pleiotropic regulatory locus 1 (486 aa).

Positions 62–101 (EPVVSQPPRQPDRINEQPGPSNALSLAAPEGSKSTQKGAT) are disordered. 7 WD repeats span residues 174–204 (GHLG…KIWD), 216–246 (GHIE…KCWD), 258–288 (GHLS…RVWD), 300–330 (GHDN…KFWD), 342–371 (HHKK…KKFS), 384–413 (QQKT…WFWD), and 433–463 (ESEA…KMWK). Short sequence motifs (DWD box) lie at residues 275 to 290 (LLTG…WDIR) and 317 to 332 (VVTG…WDLR). The segment at 465–486 (DENATPETHPINFKPPKEIRRF) is disordered.

It belongs to the WD repeat PRL1/PRL2 family. In terms of assembly, component of the multiprotein assembly MOS4-associated complex (MAC) at least composed of MOS4, CDC5, PRL1 and PRP19. Interacts with CDC5. Component of the CUL4-RBX1-DDB1-PRL1 E3 ubiquitin-protein ligase complex. Interacts with DDB1A through its DWD motif. Interacts with AKIN10, AKIN11 and PIPC. Interacts with KAP2.

It localises to the nucleus. Its pathway is protein modification; protein ubiquitination. In terms of biological role, pleiotropic regulator of glucose, stress and hormone responses. Also regulates cytochrome P450 CYP90A1/CPD. Coordinates the expression of hormone- and stress-related genes and genes related to cell wall modification and growth, leading to altered sugar-dependent growth and developmental responses. Component of the MAC complex that probably regulates defense responses through transcriptional control and thereby is essential for plant innate immunity. By suppressing the expression of several (1)O(2)-responsive genes, PRL1 seems to play a major role in modulating responses of plants to environmental changes by interconnecting (1)O(2)-mediated retrograde signaling with other signaling pathways. Acts as a negative regulator of SNF1-related protein kinases AKIN10 and AKIN11 via the inhibition of their interaction with SKP1/ASK1. Component of the CUL4-RBX1-DDB1-PRL1 E3 ubiquitin-protein ligase complex, PRL1 may function as the substrate recognition module within this complex, leading to the AKIN10 degradation. This is Protein pleiotropic regulatory locus 1 (PRL1) from Arabidopsis thaliana (Mouse-ear cress).